A 564-amino-acid chain; its full sequence is MTKFVFVTGGVVSSLGKGIAAASLAALLETRGIRVTILKLDPYINVDPGTMNPFQHGEVFVTDDGAETDLDLGHYERFISTKMTRRNNFTTGQIYESVIRKERRGDYLGGTVQVIPHITDEIKLFIRNGVSDAQVAIVEIGGTVGDIESLPFLEAIRQMSVQLPHHDTCFIHLTLLPYISSAGELKTKPTQHSVKELREIGIQPDVLLCRSDRPLPLDERRKIALFTNVREESVISAIDVDNIYKIPALLHEQMLDEIVCHRLGILAKPANLTTWKKLIHALEHPEHEVSIALVGKYVDLTESYKSLSEALIHAGIHTRCKINIHYIDSENIERHGTGCLANMDAILVPGGFGKRGVEGKIMAISHARNHQIPYLGICLGMQLAVIEFARNCLQLENAHSTEFNPDTPYPVLGLITEWRDRRGQIEKRSPQTDLGGTMRLGGQECLLKPHTLARKIYGTDKIIERHRHRYEVNAEFIPQLEQAGLQVSGLSAAENLCEMIELPQSRHPWFVACQFHPEFTSTPRNGHPLFNDYVRAAISFADKSGHAKLRDHNMQKNVATDSTH.

The tract at residues 1-265 (MTKFVFVTGG…DEIVCHRLGI (265 aa)) is amidoligase domain. S13 is a binding site for CTP. S13 is a binding site for UTP. Residues 14–19 (SLGKGI) and D71 contribute to the ATP site. Mg(2+)-binding residues include D71 and E139. Residues 146 to 148 (DIE), 186 to 191 (KTKPTQ), and K222 contribute to the CTP site. Residues 186-191 (KTKPTQ) and K222 each bind UTP. One can recognise a Glutamine amidotransferase type-1 domain in the interval 290–543 (SIALVGKYVD…VRAAISFADK (254 aa)). G351 lines the L-glutamine pocket. Catalysis depends on C378, which acts as the Nucleophile; for glutamine hydrolysis. Residues 379-382 (LGMQ), E402, and R469 each bind L-glutamine. Active-site residues include H516 and E518.

It belongs to the CTP synthase family. As to quaternary structure, homotetramer.

It carries out the reaction UTP + L-glutamine + ATP + H2O = CTP + L-glutamate + ADP + phosphate + 2 H(+). The catalysed reaction is L-glutamine + H2O = L-glutamate + NH4(+). The enzyme catalyses UTP + NH4(+) + ATP = CTP + ADP + phosphate + 2 H(+). It functions in the pathway pyrimidine metabolism; CTP biosynthesis via de novo pathway; CTP from UDP: step 2/2. With respect to regulation, allosterically activated by GTP, when glutamine is the substrate; GTP has no effect on the reaction when ammonia is the substrate. The allosteric effector GTP functions by stabilizing the protein conformation that binds the tetrahedral intermediate(s) formed during glutamine hydrolysis. Inhibited by the product CTP, via allosteric rather than competitive inhibition. Catalyzes the ATP-dependent amination of UTP to CTP with either L-glutamine or ammonia as the source of nitrogen. Regulates intracellular CTP levels through interactions with the four ribonucleotide triphosphates. This chain is CTP synthase, found in Nitrosomonas eutropha (strain DSM 101675 / C91 / Nm57).